Here is a 358-residue protein sequence, read N- to C-terminus: Peptide chain release factor 1 (358 aa).

Q233 bears the N5-methylglutamine mark.

Belongs to the prokaryotic/mitochondrial release factor family. Post-translationally, methylated by PrmC. Methylation increases the termination efficiency of RF1.

It localises to the cytoplasm. Its function is as follows. Peptide chain release factor 1 directs the termination of translation in response to the peptide chain termination codons UAG and UAA. The polypeptide is Peptide chain release factor 1 (Clostridium botulinum (strain Okra / Type B1)).